A 286-amino-acid chain; its full sequence is MASLAKNILQFRSKITGKLNTPDFRVYCYKNNKPISFFHDVPLTSDKDTFNMVTEIPRWTQAKCEISLTSPFHPIKQDLKNGKLRYVANSFPYHGFIWNYGALPQTWEDPNVIDSRTKMKGDGDPLDVCEIGGSIGYIGQIKQVKVLGALGLIDQGETDWKILAIDINDPRAKLLNDISDVQNLMPRLLPCTRDWFAIYKIPDGKPKNRFFFDGNYLPKSDALDIIAQCHQHWKVSRDRKQYIKNFHNESVNNVDLINKINSLKEEVSQNVSNYPSFPYFHTIPNL.

Residue R85 coordinates diphosphate. The Mg(2+) site is built by D122, D127, and D159.

This sequence belongs to the PPase family. Mg(2+) is required as a cofactor.

It is found in the cytoplasm. It carries out the reaction diphosphate + H2O = 2 phosphate + H(+). This is Putative inorganic pyrophosphatase C3A12.02 from Schizosaccharomyces pombe (strain 972 / ATCC 24843) (Fission yeast).